Here is a 780-residue protein sequence, read N- to C-terminus: MDQNSVPEKAQNEADTNNADRFFRSHSSPPHHRPGHSRALHHYELHHHGVPHQRGESHHPPEFQDFHDQALSSHVHQSHHHSEARNHGRAHGPTGFGLAPSQGAVPSHRSYGEDYHDELQRDGRRHHDGSQYGGFHQQSDSHYHRGSHHGRPQYLGENLSHYSSGVPHHGEASHHGGSYLPHGPNPYSESFHHSEASHLSGLQHDESQHHQVPHRGWPHHHQVHHHGRSRHHEAHQHGKSPHHGETISPHSSVGSYQRGISDYHSEYHQGDHHPSEYHHGDHPHHTQHHYHQTHRHRDYHQHQDHHGAYHSSYLHGDYVQSTSQLSIPHTSRSLIHDAPGPAASRTGVFPYHVAHPRGSAHSMTRSSSTIRSRVTQMSKKVHTQDISTKHSEDWGKEEGQFQKRKTGRLQRTRKKGHSTNLFQWLWEKLTFLIQGFREMIRNLTQSLAFETFIFFVVCLNTVMLVAQTFAEVEIRGEWYFMALDSIFFCIYVVEALLKIIALGLSYFFDFWNNLDFFIMAMAVLDFLLMQTHSFAIYHQSLFRILKVFKSLRALRAIRVLRRLSFLTSVQEVTGTLGQSLPSIAAILILMFTCLFLFSAVLRALFRKSDPKRFQNIFTTIFTLFTLLTLDDWSLIYMDSRAQGAWYIIPILVIYIIIQYFIFLNLVITVLVDSFQTALFKGLEKAKQERAARIQEKLLEDSLTELRAAEPKEVASEGTMLKRLIEKKFGTMTEKQQELLFHYLQLVASVEQEQQKFRSQAAVIDEIVDTTFEAGEEDFRN.

Disordered regions lie at residues 1 to 37 (MDQN…PGHS), 71 to 306 (LSSH…QDHH), and 376 to 412 (QMSK…LQRT). Residues 1-447 (MDQNSVPEKA…EMIRNLTQSL (447 aa)) are Cytoplasmic-facing. The span at 110–122 (SYGEDYHDELQRD) shows a compositional bias: basic and acidic residues. The segment covering 211–241 (QVPHRGWPHHHQVHHHGRSRHHEAHQHGKSP) has biased composition (basic residues). Over residues 261-284 (SDYHSEYHQGDHHPSEYHHGDHPH) the composition is skewed to basic and acidic residues. The segment covering 285–299 (HTQHHYHQTHRHRDY) has biased composition (basic residues). Positions 387–401 (STKHSEDWGKEEGQF) are enriched in basic and acidic residues. Over residues 402–412 (QKRKTGRLQRT) the composition is skewed to basic residues. The chain crosses the membrane as a helical span at residues 448–469 (AFETFIFFVVCLNTVMLVAQTF). At 470–478 (AEVEIRGEW) the chain is on the extracellular side. The helical transmembrane segment at 479–500 (YFMALDSIFFCIYVVEALLKII) threads the bilayer. Residues 501–508 (ALGLSYFF) lie on the Cytoplasmic side of the membrane. The helical transmembrane segment at 509-531 (DFWNNLDFFIMAMAVLDFLLMQT) threads the bilayer. At 532 to 540 (HSFAIYHQS) the chain is on the extracellular side. The chain crosses the membrane as a helical span at residues 541–563 (LFRILKVFKSLRALRAIRVLRRL). Residues 564–581 (SFLTSVQEVTGTLGQSLP) are Cytoplasmic-facing. Residues 582–604 (SIAAILILMFTCLFLFSAVLRAL) form a helical membrane-spanning segment. Residues 605–615 (FRKSDPKRFQN) lie on the Extracellular side of the membrane. The segment at residues 616–628 (IFTTIFTLFTLLT) is an intramembrane region (helical; Pore-forming). Over 629-645 (LDDWSLIYMDSRAQGAW) the chain is Extracellular. Residues 646–671 (YIIPILVIYIIIQYFIFLNLVITVLV) form a helical membrane-spanning segment. Topologically, residues 672–780 (DSFQTALFKG…FEAGEEDFRN (109 aa)) are cytoplasmic.

This sequence belongs to the cation channel sperm-associated (TC 1.A.1.19) family. Component of the CatSper complex or CatSpermasome composed of the core pore-forming members CATSPER1, CATSPER2, CATSPER3 and CATSPER4 as well as auxiliary members CATSPERB, CATSPERG, CATSPERD, CATSPERE, CATSPERZ, C2CD6/CATSPERT, TMEM249, TMEM262 and EFCAB9. HSPA1 may be an additional auxiliary complex member. The core complex members CATSPER1, CATSPER2, CATSPER3 and CATSPER4 form a heterotetrameric channel. The auxiliary CATSPERB, CATSPERG, CATSPERD and CATSPERE subunits form a pavilion-like structure over the pore which stabilizes the complex through interactions with CATSPER4, CATSPER3, CATSPER1 and CATSPER2 respectively. TMEM262/CATSPERH interacts with CATSPERB, further stabilizing the complex. C2CD6/CATSPERT interacts at least with CATSPERD and is required for targeting the CatSper complex in the flagellar membrane. Interacts with Ca(v)3.3/CACNA1I, leading to suppression of T-type calcium channel activity. As to expression, testis-specific.

The protein localises to the cell projection. The protein resides in the cilium. It is found in the flagellum membrane. The catalysed reaction is Ca(2+)(in) = Ca(2+)(out). Its activity is regulated as follows. The CatSper calcium channel is indirectly activated by extracellular progesterone and prostaglandins following the sequence: progesterone &gt; PGF1-alpha = PGE1 &gt; PGA1 &gt; PGE2 &gt;&gt; PGD2. The CatSper calcium channel is directly inhibited by endocannabinoid 2-arachidonoylglycerol (2AG). Indirect activation by progesterone takes place via the following mechanism: progesterone binds and activates the acylglycerol lipase ABHD2, which in turn mediates hydrolysis of 2AG inhibitor, relieving inhibition of the CatSper channel. The primary effect of progesterone activation is to shift voltage dependence towards more physiological, negative membrane potentials; it is not mediated by metabotropic receptors and second messengers. Sperm capacitation enhances the effect of progesterone by providing additional negative shift. Also activated by the elevation of intracellular pH. Functionally, pore-forming subunit of the CatSper complex, a sperm-specific voltage-gated calcium channel that plays a central role in calcium-dependent physiological responses essential for successful fertilization, such as sperm hyperactivation, acrosome reaction and chemotaxis towards the oocyte. The protein is Cation channel sperm-associated protein 1 (CATSPER1) of Homo sapiens (Human).